Here is a 126-residue protein sequence, read N- to C-terminus: uncharacterized protein (126 aa).

One can recognise an HTH hxlR-type domain in the interval 20–118 (CPSREVLKHV…WIELNLPEVL (99 aa)).

This is an uncharacterized protein from Escherichia coli (strain K12).